We begin with the raw amino-acid sequence, 62 residues long: uncharacterized protein (62 aa).

Residues 1-62 are disordered; sequence MSSTAEEMAA…SNGEAKRKEK (62 aa). The span at 28-37 shows a compositional bias: basic and acidic residues; that stretch reads TKSDRVEHKH.

This is an uncharacterized protein from Caenorhabditis elegans.